The chain runs to 548 residues: GLC7-interacting protein 2 (548 aa).

The span at 1–23 (MYIKAEQKPQQFERKNEKLDRNK) shows a compositional bias: basic and acidic residues. Disordered regions lie at residues 1–54 (MYIK…STEE) and 118–143 (VESL…STVP). At Ser-51 the chain carries Phosphoserine. Thr-52 carries the phosphothreonine modification. Ser-155 carries the post-translational modification Phosphoserine. Residues 191–212 (RSKSLPTTPGIRSGNGVQARDG) are disordered. 2 positions are modified to phosphoserine: Ser-221 and Ser-238. The tract at residues 293–346 (FAHPAKISNPNNGKGTNNTKLRKSKRFQNLLKNRTDMPPSKSNKKFVNGGGAHE) is disordered. The CBM21 domain maps to 419 to 534 (HNGNDCNGVA…NNNGNNYKVD (116 aa)).

Interacts with phosphatase 1 (GLC7).

The polypeptide is GLC7-interacting protein 2 (GIP2) (Saccharomyces cerevisiae (strain ATCC 204508 / S288c) (Baker's yeast)).